The sequence spans 6919 residues: Nonribosomal peptide synthetase easA (6919 aa).

The region spanning 17-93 is the Carrier 1 domain; sequence TNNEVVEKDI…ELCQSVKLAE (77 aa). An O-(pantetheine 4'-phosphoryl)serine modification is found at Ser-54. The epimerization 1 stretch occupies residues 123-427; that stretch reads EAQKLYASTK…FLRKVKDTRM (305 aa). A disordered region spans residues 294-319; sequence FRRSTPVESTNDERNTNERQHNRHQN. Basic and acidic residues predominate over residues 304–319; the sequence is NDERNTNERQHNRHQN. Positions 604–981 are condensation 1; sequence LNVELDCGRL…ISTTQEINQL (378 aa). Positions 1003–1394 are adenylation 1; sequence QRLRRPDAWA…GRRDTQIKVR (392 aa). Positions 1531–1608 constitute a Carrier 2 domain; the sequence is EPETLLERQV…QLAQTAEVKD (78 aa). Ser-1569 carries the O-(pantetheine 4'-phosphoryl)serine modification. The interval 1617 to 2031 is epimerization 2; that stretch reads LLSPMQKWYF…ANAISALGTE (415 aa). The interval 2072-2509 is condensation 2; the sequence is VEDIYPCSPI…VGQLNTVTPK (438 aa). The interval 2541-2930 is adenylation 2; sequence RPNATAVCAW…ARKDSQVKVR (390 aa). A Carrier 3 domain is found at 3067 to 3143; it reads APSTFMEKKL…EMAAHLEAQM (77 aa). The residue at position 3104 (Ser-3104) is an O-(pantetheine 4'-phosphoryl)serine. The interval 3188 to 3599 is condensation 3; that stretch reads EDVYPCTPLQ…LLSKDEARRL (412 aa). Positions 3620-4018 are adenylation 3; it reads QHVSTNPYAP…GRRDGQVKIR (399 aa). The Carrier 4 domain maps to 4151–4228; that stretch reads TPSTSEEKNI…QLAKKAVIKT (78 aa). The residue at position 4188 (Ser-4188) is an O-(pantetheine 4'-phosphoryl)serine. The segment at 4282–4708 is condensation 4; that stretch reads ESIYYCSPIQ…EIDVIPTGDV (427 aa). An adenylation 4 region spans residues 4732-5133; that stretch reads EQALSQPGAQ…GRADGQIKIR (402 aa). The 78-residue stretch at 5260-5337 folds into the Carrier 5 domain; it reads ALSTETERRL…DMANTIANSE (78 aa). Ser-5296 carries the O-(pantetheine 4'-phosphoryl)serine modification. A condensation 5 region spans residues 5380–5775; sequence EDAYPCTPLQ…VFGQLQSAAN (396 aa). The segment at 5824–6216 is adenylation 5; it reads SCPDAQAVHA…IGRRDTQVKI (393 aa). One can recognise a Carrier 6 domain in the interval 6344–6421; sequence EPATVTERLL…DMATLIDRKT (78 aa). Ser-6381 carries the O-(pantetheine 4'-phosphoryl)serine modification.

It functions in the pathway antibiotic biosynthesis. Its function is as follows. Nonribosomal peptide synthetase; part of the gene cluster that mediates the biosynthesis of emericellamides, secondary metabolites acting as antibiotics. The biosynthesis of emericellamides initiates from the highly reducing polyketide synthase easB which catalyzes the formation of the linear polyketide chain. EasB produces several polyketides that can be further processed by the downstream enzymes. The polyketides are released from easB as linear polyketide carboxylic acids, which are converted to CoA thioesters by the acyl-CoA ligase easD. The substrates are then loaded onto the acyltransferase easC, which shuttles them to the first thiolation (T) domain of the nonribosomal peptide synthetase easA. EasA then performs condensation of the polyketides with one glycine, two alanine, one valine and one leucine residues. A last step of cyclization leads to the production of emericellamides. The sequence is that of Nonribosomal peptide synthetase easA from Emericella nidulans (strain FGSC A4 / ATCC 38163 / CBS 112.46 / NRRL 194 / M139) (Aspergillus nidulans).